Reading from the N-terminus, the 286-residue chain is 33 kDa chaperonin (286 aa).

Disulfide bonds link Cys225-Cys227 and Cys258-Cys261.

The protein belongs to the HSP33 family. Under oxidizing conditions two disulfide bonds are formed involving the reactive cysteines. Under reducing conditions zinc is bound to the reactive cysteines and the protein is inactive.

The protein localises to the cytoplasm. Redox regulated molecular chaperone. Protects both thermally unfolding and oxidatively damaged proteins from irreversible aggregation. Plays an important role in the bacterial defense system toward oxidative stress. The sequence is that of 33 kDa chaperonin from Shewanella woodyi (strain ATCC 51908 / MS32).